Reading from the N-terminus, the 138-residue chain is MGLRSCTHFATLVMPLWALAFCFLVLVPVPAQTTSLQISKGDRRLQDLESNMGAESDQPNANLVGTSLSRFGDKRNQKIITFGRRVPRPIIPIELDLLMDNDDENTKAKRFDDYGHMRFGKRGGDDQFDDYGHMRFGR.

The N-terminal stretch at 1 to 33 (MGLRSCTHFATLVMPLWALAFCFLVLVPVPAQT) is a signal peptide. The propeptide occupies 34 to 73 (TSLQISKGDRRLQDLESNMGAESDQPNANLVGTSLSRFGD). At phenylalanine 82 the chain carries Phenylalanine amide. Positions 86-108 (VPRPIIPIELDLLMDNDDENTKA) are excised as a propeptide. Tyrosine 114 is subject to Sulfotyrosine. Phenylalanine 119 carries the phenylalanine amide modification. Tyrosine 131 bears the Sulfotyrosine mark. A Phenylalanine amide modification is found at phenylalanine 136.

This sequence belongs to the gastrin/cholecystokinin family.

The protein resides in the secreted. Its function is as follows. Drosulfakinin-0 (DSK 0) plays diverse biological roles including regulating gut muscle contraction in adults but not in larvae. The protein is Drosulfakinins of Drosophila teissieri (Fruit fly).